Here is a 78-residue protein sequence, read N- to C-terminus: Gas vesicle protein A (78 aa).

An alpha helix 1 region spans residues 9-19 (LAEVLDRVLDK). Positions 23–31 (VDVWARISL) are beta-strand 1. Residues 32-34 (VGI) are beta turn. The segment at 35–43 (EILTVEARV) is beta-strand 2. The interval 48 to 67 (VDTFLHYAEEIAKIEQAELT) is alpha helix 2.

Belongs to the gas vesicle GvpA family. The gas vesicle shell is 2 nm thick and consists of a single layer of this protein. It forms helical ribs nearly perpendicular to the long axis of the vesicle. Modeled as antiparallel homodimers.

The protein localises to the gas vesicle shell. In terms of biological role, gas vesicles are hollow, gas filled proteinaceous nanostructures found in some microorganisms. During planktonic growth they allow positioning of the organism at a favorable depth for light or nutrient acquisition. GvpA forms the protein shell. This gene replaces p-gvpA of H.salinarum very poorly, only about 1% of GVs are formed; the few gas vesicles formed are quite strong with a very high critical collapse pressure (CCP) of 0.213 MPa. Expression of a 9.5 kb mc-vac DNA fragment containing 2 divergently transcribed regions (gvpD-gvpE-gvpF-gvpG-gvpH-gvpI-gvpJ-gvpK-gvpL-gvpM and gvpA-gvpC-gvpN-gvpO) allows H.volcanii to produce gas vesicles. This Haloferax mediterranei (strain ATCC 33500 / DSM 1411 / JCM 8866 / NBRC 14739 / NCIMB 2177 / R-4) (Halobacterium mediterranei) protein is Gas vesicle protein A.